Reading from the N-terminus, the 569-residue chain is Matrix metalloproteinase-21 (569 aa).

A signal peptide spans 1–24 (MLAASIFRPTLLLCWLAAPWPTQP). Residues 25–144 (ESLFHSRDRS…GPPPRARSRR (120 aa)) constitute a propeptide that is removed on maturation. Positions 115 to 122 (PRCGVPDM) match the Cysteine switch motif. The interval 115–166 (PRCGVPDMRPPPPSAPPSPPGPPPRARSRRSPRAPLSLSRRGWQPRGYPDGG) is disordered. Residue Cys117 participates in Zn(2+) binding. Over residues 122 to 139 (MRPPPPSAPPSPPGPPPR) the composition is skewed to pro residues. The segment covering 147 to 156 (RAPLSLSRRG) has biased composition (low complexity). His283 provides a ligand contact to Zn(2+). Residue Glu284 is part of the active site. 2 residues coordinate Zn(2+): His287 and His293. A disulfide bridge connects residues Cys329 and Cys560. Hemopexin repeat units follow at residues 330–389 (EGSF…WPGI), 391–447 (THNI…FPGI), 448–496 (PSPL…FPAV), and 503–559 (FRNI…WFDV). Asn372 is a glycosylation site (N-linked (GlcNAc...) asparagine).

The protein belongs to the peptidase M10A family. Zn(2+) serves as cofactor. It depends on Ca(2+) as a cofactor. Post-translationally, the precursor is cleaved by a furin endopeptidase. As to expression, identified in fetal brain, kidney and liver. In adult tissues found primarily in ovary, kidney, liver, lung, placenta, brain and peripheral blood leukocytes. Expressed as well in various cancer cell lines.

Its subcellular location is the secreted. Its function is as follows. Plays a specialized role in the generation of left-right asymmetry during embryogenesis. May act as a negative regulator of the NOTCH-signaling pathway. Cleaves alpha-1-antitrypsin. The sequence is that of Matrix metalloproteinase-21 (MMP21) from Homo sapiens (Human).